The sequence spans 243 residues: HTH-type transcriptional repressor NagR (243 aa).

The 69-residue stretch at Ile-9 to Pro-77 folds into the HTH gntR-type domain. A DNA-binding region (H-T-H motif) is located at residues Glu-37–Ser-56. Residues Phe-89 to Thr-90, Arg-133 to Arg-135, Glu-145, Ser-165 to Tyr-167, Glu-222, and Tyr-228 contribute to the alpha-D-glucosamine 6-phosphate site. Residues Phe-89–Thr-90, Arg-133–Arg-135, Glu-145, Ser-165–Tyr-167, Glu-222, and Tyr-228 contribute to the N-acetyl-D-glucosamine 6-phosphate site.

In terms of assembly, homodimer. Forms dimers via the C-terminal effector-binding domain. At high concentrations, probably forms polymers along the DNA.

With respect to regulation, binding to DNA is allosterically inhibited by an effector molecule. Binding of the effector to the C-terminal domain leads to a conformational change that modulates binding to DNA and thereby regulates transcription of the target genes. Glucosamine-6-phosphate (GlcN6P) and/or N-acetylglucosamine-6-phosphate (GlcNAc6P) are putative effectors of NagR. Binding of GlcNAc6P may prevent the protein-protein interactions responsible for polymerization along the DNA, but not the specific DNA binding. Its function is as follows. Main transcriptional repressor of genes involved in N-acetylglucosamine (GlcNAc) transport and utilization. Represses the expression of the nagAB and nagP operons by binding directly within their upstream regions. Binds to the DNA consensus sequence 5'-ATTGGTATAGACAACT-3'. Also acts as a weak repressor of mapB expression. This is HTH-type transcriptional repressor NagR from Bacillus subtilis (strain 168).